A 355-amino-acid polypeptide reads, in one-letter code: Mannonate dehydratase (355 aa).

The protein belongs to the mannonate dehydratase family. Fe(2+) serves as cofactor. Mn(2+) is required as a cofactor.

It carries out the reaction D-mannonate = 2-dehydro-3-deoxy-D-gluconate + H2O. It functions in the pathway carbohydrate metabolism; pentose and glucuronate interconversion. Catalyzes the dehydration of D-mannonate. In Brachyspira hyodysenteriae (strain ATCC 49526 / WA1), this protein is Mannonate dehydratase.